The primary structure comprises 95 residues: UPF0235 protein Ssed_1229 (95 aa).

It belongs to the UPF0235 family.

The sequence is that of UPF0235 protein Ssed_1229 from Shewanella sediminis (strain HAW-EB3).